Consider the following 224-residue polypeptide: Pyridoxal 5'-phosphate synthase subunit PdxT (224 aa).

Gly55 to Ser57 lines the L-glutamine pocket. The active-site Nucleophile is Cys87. Residues Arg113 and Ile142 to Arg143 contribute to the L-glutamine site. Active-site charge relay system residues include His178 and Glu180.

It belongs to the glutaminase PdxT/SNO family. In terms of assembly, in the presence of PdxS, forms a dodecamer of heterodimers. Only shows activity in the heterodimer.

It catalyses the reaction aldehydo-D-ribose 5-phosphate + D-glyceraldehyde 3-phosphate + L-glutamine = pyridoxal 5'-phosphate + L-glutamate + phosphate + 3 H2O + H(+). It carries out the reaction L-glutamine + H2O = L-glutamate + NH4(+). It functions in the pathway cofactor biosynthesis; pyridoxal 5'-phosphate biosynthesis. Catalyzes the hydrolysis of glutamine to glutamate and ammonia as part of the biosynthesis of pyridoxal 5'-phosphate. The resulting ammonia molecule is channeled to the active site of PdxS. This Syntrophus aciditrophicus (strain SB) protein is Pyridoxal 5'-phosphate synthase subunit PdxT.